We begin with the raw amino-acid sequence, 234 residues long: UPF0173 metal-dependent hydrolase R01310 (234 aa).

It belongs to the UPF0173 family.

This is UPF0173 metal-dependent hydrolase R01310 from Rhizobium meliloti (strain 1021) (Ensifer meliloti).